A 411-amino-acid chain; its full sequence is Translation initiation factor 2 subunit gamma (411 aa).

The tr-type G domain occupies 9 to 203; sequence QAEVNIGMVG…AIQDFIPTPK (195 aa). The interval 18–25 is G1; the sequence is GHVDHGKT. Residues aspartate 21, threonine 25, glycine 46, and serine 48 each coordinate Mg(2+). Position 21–26 (21–26) interacts with GTP; the sequence is DHGKTS. A G2 region spans residues 46-50; it reads GISIR. Residues cysteine 61, cysteine 64, cysteine 73, and cysteine 76 each contribute to the Zn(2+) site. The interval 90 to 93 is G3; it reads DSPG. GTP-binding positions include 146 to 149 and 181 to 183; these read NKID and SAH. Residues 146–149 form a G4 region; the sequence is NKID. Residues 181–183 form a G5 region; it reads SAH.

It belongs to the TRAFAC class translation factor GTPase superfamily. Classic translation factor GTPase family. EIF2G subfamily. As to quaternary structure, heterotrimer composed of an alpha, a beta and a gamma chain. Requires Mg(2+) as cofactor.

The catalysed reaction is GTP + H2O = GDP + phosphate + H(+). EIF-2 functions in the early steps of protein synthesis by forming a ternary complex with GTP and initiator tRNA. The polypeptide is Translation initiation factor 2 subunit gamma (Methanocaldococcus jannaschii (strain ATCC 43067 / DSM 2661 / JAL-1 / JCM 10045 / NBRC 100440) (Methanococcus jannaschii)).